The chain runs to 298 residues: tRNA pseudouridine synthase B (298 aa).

D46 serves as the catalytic Nucleophile.

Belongs to the pseudouridine synthase TruB family. Type 1 subfamily.

The enzyme catalyses uridine(55) in tRNA = pseudouridine(55) in tRNA. Its function is as follows. Responsible for synthesis of pseudouridine from uracil-55 in the psi GC loop of transfer RNAs. This Paracoccus denitrificans (strain Pd 1222) protein is tRNA pseudouridine synthase B.